The sequence spans 791 residues: Major facilitator superfamily domain-containing protein 6 (791 aa).

Residue Ala2 is modified to N-acetylalanine. Residue Thr10 is modified to Phosphothreonine. The interval 22–47 (LADPFNGISREPEPPSNETPSSTETS) is disordered. The span at 37–47 (SNETPSSTETS) shows a compositional bias: low complexity. The next 6 helical transmembrane spans lie at 73 to 93 (VFYFFFYSAYGSLYPLLPVYY), 105 to 125 (LLVGIRYFIEFCSAPFWGVVA), 132 to 152 (KIVLLFSLLCWVLFNLGIGFV), 286 to 306 (AIFLVILVVVIIGEFFSASSV), 335 to 355 (WGLAMLSVGIGIDYTHIEVLI), and 369 to 389 (QIVFIVFGVLMTMALIVATQF). The tract at residues 407 to 427 (EIPQVERNNSTESSEETPTTT) is disordered. Positions 416 to 427 (STESSEETPTTT) are enriched in low complexity. The next 6 membrane-spanning stretches (helical) occupy residues 450–470 (VLFVAWFMGFGYGFVFTFLYW), 479–499 (TTLFGVCSVLSHVSELTAYFF), 507–527 (IGHIRVLYIGLACNTARYIYI), 544–564 (GVTHAAIWAACISYLSAAVPP), 579–599 (LGLGRGCGAMIGGVLVNYFGA), and 605–625 (GIGMACLVILLLFALIQWLAV). Disordered stretches follow at residues 662 to 687 (MPRIEPRLPPKKTKHQEEQEDVNKPA) and 723 to 791 (LQGT…AGGH). Polar residues predominate over residues 750–768 (SRNQPSPDAAASQTQTSPA). Residues 782–791 (QQAQLAAGGH) show a composition bias toward low complexity.

The protein belongs to the major facilitator superfamily. MFSD6 family. May interact with HLA-B62. In terms of tissue distribution, widely expressed. Expression levels in peripheral blood mononuclear cells are highly variable between individuals, including no expression at all.

It is found in the membrane. In Homo sapiens (Human), this protein is Major facilitator superfamily domain-containing protein 6 (MFSD6).